Here is a 314-residue protein sequence, read N- to C-terminus: Mitochondrial translation factor 2 (314 aa).

The interval 111 to 136 (ENSSNIYDPSSPPDSPRKQQTHLGTI) is disordered.

In terms of assembly, component of the MRH5C complex, composed of mrh5, ppr4, mtf2, and sls1. Proteins mtf2 and sls1 form a subcomplex that serves as a scaffold to bring mrh5 and ppr4 together. The MRH5C complex associates with the small subunit of the mitochondrial ribosome.

Translation activation factor that as part of the MRH5C complex specifically recruits cox1 mRNA to the mitochondrial ribosome for translation initiation. The sequence is that of Mitochondrial translation factor 2 from Schizosaccharomyces pombe (strain 972 / ATCC 24843) (Fission yeast).